Reading from the N-terminus, the 250-residue chain is Octanoyltransferase (250 aa).

The BPL/LPL catalytic domain maps to 49-230; sequence DEINDVILVL…ALDDAFAGRL (182 aa). Substrate contacts are provided by residues 87 to 94, 160 to 162, and 173 to 175; these read RGGRITWH, ALG, and GLA. Cys-191 serves as the catalytic Acyl-thioester intermediate.

The protein belongs to the LipB family.

It is found in the cytoplasm. It catalyses the reaction octanoyl-[ACP] + L-lysyl-[protein] = N(6)-octanoyl-L-lysyl-[protein] + holo-[ACP] + H(+). The protein operates within protein modification; protein lipoylation via endogenous pathway; protein N(6)-(lipoyl)lysine from octanoyl-[acyl-carrier-protein]: step 1/2. Functionally, catalyzes the transfer of endogenously produced octanoic acid from octanoyl-acyl-carrier-protein onto the lipoyl domains of lipoate-dependent enzymes. Lipoyl-ACP can also act as a substrate although octanoyl-ACP is likely to be the physiological substrate. This Corynebacterium diphtheriae (strain ATCC 700971 / NCTC 13129 / Biotype gravis) protein is Octanoyltransferase.